We begin with the raw amino-acid sequence, 83 residues long: uncharacterized protein (83 aa).

This is an uncharacterized protein from Rickettsia conorii (strain ATCC VR-613 / Malish 7).